Here is a 675-residue protein sequence, read N- to C-terminus: Zinc finger CCCH domain-containing protein 65 (675 aa).

The segment at 294 to 320 is disordered; that stretch reads TFSNEAKMDPGTSIKKRSAPSKDAKAR. A compositionally biased stretch (basic residues) spans 307 to 320; that stretch reads IKKRSAPSKDAKAR. A coiled-coil region spans residues 314 to 342; it reads SKDAKARKRAKARIKRAQERIALGVKKLK. 3 C3H1-type zinc fingers span residues 350-377, 384-406, and 409-432; these read PKPI…HDTI, PCCY…HDLS, and PCNN…HKGT. Disordered stretches follow at residues 487 to 572 and 586 to 612; these read LKPS…LPLG and EQKT…SHIQ. The span at 490-504 shows a compositional bias: low complexity; sequence SSHSNQRNSSDASSS. Residues 543 to 567 are compositionally biased toward polar residues; that stretch reads KASSASKPNTDNSDSQTLKQSQQGS. A compositionally biased stretch (basic and acidic residues) spans 586-595; the sequence is EQKTLNREPQ. The span at 597-612 shows a compositional bias: polar residues; sequence PASSKNLKTTPSSHIQ.

In terms of biological role, possesses RNA-binding and ribonuclease activities in vitro. The sequence is that of Zinc finger CCCH domain-containing protein 65 (EMB1789) from Arabidopsis thaliana (Mouse-ear cress).